We begin with the raw amino-acid sequence, 720 residues long: Fatty acid oxidation complex subunit alpha (720 aa).

The tract at residues 1 to 189 (MIYQGETLSV…KLGLVDAVVA (189 aa)) is enoyl-CoA hydratase/isomerase. A substrate-binding site is contributed by D296. A 3-hydroxyacyl-CoA dehydrogenase region spans residues 311 to 720 (QPTKKGVVLG…ESYYTQQVNA (410 aa)). NAD(+) contacts are provided by residues M324, D343, 400 to 402 (VVE), K407, and S429. The active-site For 3-hydroxyacyl-CoA dehydrogenase activity is H450. N453 provides a ligand contact to NAD(+). N500 and Y660 together coordinate substrate.

In the N-terminal section; belongs to the enoyl-CoA hydratase/isomerase family. This sequence in the C-terminal section; belongs to the 3-hydroxyacyl-CoA dehydrogenase family. In terms of assembly, heterotetramer of two alpha chains (FadB) and two beta chains (FadA).

It catalyses the reaction a (3S)-3-hydroxyacyl-CoA + NAD(+) = a 3-oxoacyl-CoA + NADH + H(+). It carries out the reaction a (3S)-3-hydroxyacyl-CoA = a (2E)-enoyl-CoA + H2O. The enzyme catalyses a 4-saturated-(3S)-3-hydroxyacyl-CoA = a (3E)-enoyl-CoA + H2O. The catalysed reaction is (3S)-3-hydroxybutanoyl-CoA = (3R)-3-hydroxybutanoyl-CoA. It catalyses the reaction a (3Z)-enoyl-CoA = a 4-saturated (2E)-enoyl-CoA. It carries out the reaction a (3E)-enoyl-CoA = a 4-saturated (2E)-enoyl-CoA. It participates in lipid metabolism; fatty acid beta-oxidation. Its function is as follows. Involved in the aerobic and anaerobic degradation of long-chain fatty acids via beta-oxidation cycle. Catalyzes the formation of 3-oxoacyl-CoA from enoyl-CoA via L-3-hydroxyacyl-CoA. It can also use D-3-hydroxyacyl-CoA and cis-3-enoyl-CoA as substrate. This chain is Fatty acid oxidation complex subunit alpha, found in Photobacterium profundum (strain SS9).